Here is a 376-residue protein sequence, read N- to C-terminus: Glutamate 5-kinase (376 aa).

ATP is bound at residue K15. Residues S56, D143, and N155 each contribute to the substrate site. Residue S175–D176 participates in ATP binding. Positions K281 to S358 constitute a PUA domain.

It belongs to the glutamate 5-kinase family.

The protein resides in the cytoplasm. It catalyses the reaction L-glutamate + ATP = L-glutamyl 5-phosphate + ADP. It participates in amino-acid biosynthesis; L-proline biosynthesis; L-glutamate 5-semialdehyde from L-glutamate: step 1/2. Its function is as follows. Catalyzes the transfer of a phosphate group to glutamate to form L-glutamate 5-phosphate. This chain is Glutamate 5-kinase, found in Rhodopseudomonas palustris (strain HaA2).